Here is a 112-residue protein sequence, read N- to C-terminus: Pediocin PA-1 immunity protein (112 aa).

Imparts immunity to pediocin PA-1/ACH to naturally sensitive host strains. The polypeptide is Pediocin PA-1 immunity protein (pedB) (Pediococcus acidilactici).